A 329-amino-acid chain; its full sequence is Lipoyl synthase (329 aa).

Cys72, Cys77, Cys83, Cys98, Cys102, Cys105, and Ser313 together coordinate [4Fe-4S] cluster. Positions 83–303 constitute a Radical SAM core domain; sequence CWSHGTATIM…QIGLKKGFFE (221 aa).

It belongs to the radical SAM superfamily. Lipoyl synthase family. [4Fe-4S] cluster is required as a cofactor.

The protein localises to the cytoplasm. It catalyses the reaction [[Fe-S] cluster scaffold protein carrying a second [4Fe-4S](2+) cluster] + N(6)-octanoyl-L-lysyl-[protein] + 2 oxidized [2Fe-2S]-[ferredoxin] + 2 S-adenosyl-L-methionine + 4 H(+) = [[Fe-S] cluster scaffold protein] + N(6)-[(R)-dihydrolipoyl]-L-lysyl-[protein] + 4 Fe(3+) + 2 hydrogen sulfide + 2 5'-deoxyadenosine + 2 L-methionine + 2 reduced [2Fe-2S]-[ferredoxin]. Its pathway is protein modification; protein lipoylation via endogenous pathway; protein N(6)-(lipoyl)lysine from octanoyl-[acyl-carrier-protein]: step 2/2. Catalyzes the radical-mediated insertion of two sulfur atoms into the C-6 and C-8 positions of the octanoyl moiety bound to the lipoyl domains of lipoate-dependent enzymes, thereby converting the octanoylated domains into lipoylated derivatives. The protein is Lipoyl synthase of Legionella pneumophila (strain Corby).